The chain runs to 30 residues: TMCYSHTTTSRAILTNCGENSCYRKSRVHP.

Cys-3 and Cys-22 are joined by a disulfide.

The protein belongs to the three-finger toxin family. Short-chain subfamily. Acn-esterase inhibitor sub-subfamily. Post-translationally, contains 4 disulfide bonds. In terms of tissue distribution, expressed by the venom gland.

The protein localises to the secreted. Functionally, inhibits acetylcholinesterase. Has been described to inhibit both the slowly and the rapidly inactivating phases of potassium efflux. The sequence is that of Dendrotoxin A from Dendroaspis angusticeps (Eastern green mamba).